A 114-amino-acid polypeptide reads, in one-letter code: Non-specific lipid-transfer protein 2 (114 aa).

The N-terminal stretch at 1 to 23 is a signal peptide; sequence MEMVNKIACFVLLCMVVVAPHAE. 4 disulfides stabilise this stretch: cysteine 27/cysteine 73, cysteine 37/cysteine 50, cysteine 51/cysteine 96, and cysteine 71/cysteine 110.

Belongs to the plant LTP family.

Its function is as follows. Plant non-specific lipid-transfer proteins transfer phospholipids as well as galactolipids across membranes. May play a role in wax or cutin deposition in the cell walls of expanding epidermal cells and certain secretory tissues. In Solanum chilense (Tomato), this protein is Non-specific lipid-transfer protein 2.